The primary structure comprises 1616 residues: MRSIIIASIVALAIAFSPAFERTFEPKIDYHYKFDGLVLSGLPTASSELSQSRFSARVRIQAVDDRHIHLQLVNIHMAASHLPESEQIPSLNSMEQRELSEEYKQMLKLPLRAQLRNGLIAELQFDKEDAEWSKNMKRAVVNMISFNPIAPRNEIEKIESSYDKEEQSEENTSFFTNEKTLEGDCQVAYTVIREQKKTIITKSINFDKCTERSEIAYGLRYSSECPECEKDTVLIRPQTVYTYILENEELKESEVRSLYTVNVNGQEVMKTETRSKLVLEENHSIKSHIEKVNGEKESIIYSSRWEQLVEDFFKNGDKAEFAPFEKFPLDKKMHLIKTITEQIQEVENNIPETSHFLARLVRIFRTTSTSQLKEIHETLYVKADKKIQSLMEHALAIAGTKNTIQHILVHIENEDIVPLEAAQLLKSIQETPFPSQTIAEALIKFAESRVSKNNQVVRQSAWLAAGSVVRGIVDYKNIRPLVREDKRELKEKFLRVFMQQYKDAETTYEKILALKSIGNAGLDISVNQLNEIIVDKRQLLPVRKEAIDALRLLKDTMPRKIQKVLLPIYKNRQYEPEIRMLALWRMMHTRPEESLLVQVVSQMEKETNQQVAALTHQMIRHFAKSTNPCYQRVAIVCSKVLSFTRYQPQEQMIASSYAQLPLFLQNSFSGAQFDFAAIFEKNSFLLKDLHASLDAVFGGNWNKYFAQIGFSQQHMDKYVQMALEKLESIEKESTTVVRGRRIQTGITLLKELALKMNIRARPANYNEKDAFAMVYLRYKDMDYAILPVDTQLIEKLIEKYISNGKVQFSEIRRLLNQEHEFETHHAAYFYEAIRKFPTTLGLPLIVSGKIPTVFSAEGQFSLGLEETELRLTVEARPSVAATHVYEMRMFTPLFEQGVKSVQSVRAYTPIKIQAVVGMKRNFEIVYKVVVPENQKSIISLTTRPVVFLRFPGFSKFEYIEAEERTVVVPQWQQKTQEIEKVFNFLGLEVSTRGNILNQHTLENWLLAEQDFEVSVENKYRPAEFTARLTVGQLEKTELSQIKYNKIFEKEFELEQENTESRREYFTKMVKSIQKEQGYKSVVSLRLEAPRDYTMNTEVTTVCDKQVRMCQWEVEIRRSPILEETKEWTLRSQLLVVRPEMPSSLRQLHDQPHREVQLSLTSTWGSQKKSEVTVNAQLQQSKEQKKYERNMDRHFNGMPEYELLIKAARLNQINAVAEYKLTRETEQVLARYFDLVKAYNYWTVSSRPENNENDRVVVQLTVEPMSRQYVNITMQSPIERVELKNVQVPRVYLPSIAQRSVKHLLNEASGSVCKVQKNQIRTFDDVLYNTPLTTCYSLIAKDCSEEPTFAVLSKKTEKNSEEMIIKVIRGEQEIVAQLQNEEIRVKVDGKKILSEDYSAHQIERLGESDIVIELPEGEVRFDGYTIKTQLPSYSRKNQLCGLCGNNDDESTNEFYTSDNTETKDIEEFHRSYLLKNEECEAEEERLSEKKNYRKYDERKYESEEYSFEETYDYEQENTNKKQKNQRSQKKSDLVEKTQIKEFSHRICFSVEPVAECRRRGYEAVEQQQRKVRFTCLPRHSSEARRLVKEARQGTVQLDDHKISFVHSVQVPVACVAY.

An N-terminal signal peptide occupies residues 1–19 (MRSIIIASIVALAIAFSPA). Positions 24–689 (FEPKIDYHYK…EKNSFLLKDL (666 aa)) constitute a Vitellogenin domain. Asn1270 carries N-linked (GlcNAc...) asparagine glycosylation. Residues 1310 to 1479 (SVCKVQKNQI…SYLLKNEECE (170 aa)) enclose the VWFD domain. 2 disulfide bridges follow: Cys1312–Cys1442 and Cys1334–Cys1478. The segment covering 1505–1514 (SFEETYDYEQ) has biased composition (acidic residues). Positions 1505–1531 (SFEETYDYEQENTNKKQKNQRSQKKSD) are disordered.

As to expression, expressed in the intestine of adult hermaphrodites.

The protein resides in the secreted. In terms of biological role, precursor of the egg-yolk proteins that are sources of nutrients during embryonic development. Together with other vitellogenins, may play a role in modulating life-span, acting via induction of autophagy and lysosomal lipolysis. This Caenorhabditis elegans protein is Vitellogenin-1 (vit-1).